The chain runs to 414 residues: Serine/threonine transporter SstT (414 aa).

Over 2-15 the chain is Cytoplasmic; sequence TTQRSPGLFRRLAH. Residues 16–36 traverse the membrane as a helical segment; sequence GSLVKQILVGLVLGILLAWIS. Residues 37-45 lie on the Periplasmic side of the membrane; that stretch reads KPAAEAVGL. Residues 46-66 form a helical membrane-spanning segment; that stretch reads LGTLFVGALKAVAPILVLMLV. Topologically, residues 67 to 83 are cytoplasmic; that stretch reads MASIANHQHGQKTNIRP. A helical membrane pass occupies residues 84–104; the sequence is ILFLYLLGTFSAALAAVVFSF. Topologically, residues 105–142 are periplasmic; the sequence is AFPSTLHLSSSAGDISPPSGIVEVMRGLVMSMVSNPID. The chain crosses the membrane as a helical span at residues 143-163; the sequence is ALLKGNYIGILVWAIGLGFAL. Topologically, residues 164–179 are cytoplasmic; that stretch reads RHGNETTKNLVNDLSN. A helical transmembrane segment spans residues 180–200; it reads AVTFMVKLVIRFAPIGIFGLV. Residues 201 to 217 are Periplasmic-facing; sequence SSTLATTGFSTLWGYAQ. The helical transmembrane segment at 218–238 threads the bilayer; sequence LLVVLVGCMLLVALVVNPLLV. Topologically, residues 239–299 are cytoplasmic; it reads WWKIRRNPFP…VSIPLGATIN (61 aa). A helical membrane pass occupies residues 300–320; the sequence is MAGAAITITVLTLAAVNTLGI. The Periplasmic portion of the chain corresponds to 321–331; the sequence is PVDLPTALLLS. The helical transmembrane segment at 332–352 threads the bilayer; that stretch reads VVASLCACGASGVAGGSLLLI. The Cytoplasmic segment spans residues 353–414; that stretch reads PLACNMFGIS…DRLANSALRN (62 aa).

Belongs to the dicarboxylate/amino acid:cation symporter (DAACS) (TC 2.A.23) family.

The protein resides in the cell inner membrane. It carries out the reaction L-serine(in) + Na(+)(in) = L-serine(out) + Na(+)(out). The catalysed reaction is L-threonine(in) + Na(+)(in) = L-threonine(out) + Na(+)(out). Involved in the import of serine and threonine into the cell, with the concomitant import of sodium (symport system). This chain is Serine/threonine transporter SstT, found in Shigella boydii serotype 4 (strain Sb227).